The chain runs to 231 residues: Eukaryotic translation initiation factor 4E-1 (231 aa).

2 EIF4G-binding regions span residues 56–59 and 66–102; these read HPLE and FDNS…NNIH. Residues 74-79, Lys-106, and 124-125 each bind mRNA; these read RQTAWG and WE. A disulfide bridge links Cys-129 with Cys-167. Residues 150-159 are EIF4G-binding; that stretch reads YTLLAMIGHQ. MRNA-binding positions include 174–179 and 219–223; these read RAKGEK and KRLDR.

This sequence belongs to the eukaryotic initiation factor 4E family. In terms of assembly, EIF4F is a multi-subunit complex, the composition of which varies with external and internal environmental conditions. It is composed of at least EIF4A, EIF4E and EIF4G. EIF4E is also known to interact with other partners. In higher plants two isoforms of EIF4F have been identified, named isoform EIF4F and isoform EIF(iso)4F. Isoform EIF4F has subunits p220 and p26, whereas isoform EIF(iso)4F has subunits p82 and p28. (Microbial infection) Interacts with potyvirus viral genome-linked protein (VPg); this interaction is possible in susceptible hosts but impaired in resistant plants. In terms of processing, according to the redox status, the Cys-129-Cys-167 disulfide bridge may have a role in regulating protein function by affecting its ability to bind capped mRNA.

It is found in the nucleus. It localises to the cytoplasm. Functionally, component of the protein complex eIF4F, which is involved in the recognition of the mRNA cap, ATP-dependent unwinding of 5'-terminal secondary structure and recruitment of mRNA to the ribosome. Recognizes and binds the 7-methylguanosine-containing mRNA cap during an early step in the initiation of protein synthesis and facilitates ribosome binding by inducing the unwinding of the mRNAs secondary structures. Key component of recessive resistance to potyviruses. Its function is as follows. (Microbial infection) Susceptibility host factor required for viral infection (e.g. pepper mottle virus (PepMoV), potato virus Y (PVY) and tobacco etch virus (TEV)) by recruiting viral RNAs to the host ribosomal complex via an interaction with viral genome-linked protein (VPg). This is Eukaryotic translation initiation factor 4E-1 from Solanum habrochaites (Wild tomato).